Reading from the N-terminus, the 372-residue chain is Alanine dehydrogenase 2 (372 aa).

His-95 is an active-site residue. Lys-169 to Asn-199 is a binding site for NAD(+).

This sequence belongs to the AlaDH/PNT family.

It carries out the reaction L-alanine + NAD(+) + H2O = pyruvate + NH4(+) + NADH + H(+). It participates in amino-acid degradation; L-alanine degradation via dehydrogenase pathway; NH(3) and pyruvate from L-alanine: step 1/1. In terms of biological role, may play a role in cell wall synthesis as L-alanine is an important constituent of the peptidoglycan layer. In Staphylococcus aureus (strain N315), this protein is Alanine dehydrogenase 2 (ald2).